A 208-amino-acid chain; its full sequence is Urease accessory protein UreG (208 aa).

Residue 10–17 (GPVGSGKT) coordinates GTP.

This sequence belongs to the SIMIBI class G3E GTPase family. UreG subfamily. Homodimer. UreD, UreF and UreG form a complex that acts as a GTP-hydrolysis-dependent molecular chaperone, activating the urease apoprotein by helping to assemble the nickel containing metallocenter of UreC. The UreE protein probably delivers the nickel.

The protein localises to the cytoplasm. Functionally, facilitates the functional incorporation of the urease nickel metallocenter. This process requires GTP hydrolysis, probably effectuated by UreG. The chain is Urease accessory protein UreG from Halalkalibacterium halodurans (strain ATCC BAA-125 / DSM 18197 / FERM 7344 / JCM 9153 / C-125) (Bacillus halodurans).